The chain runs to 303 residues: Ribosomal RNA small subunit methyltransferase H (303 aa).

S-adenosyl-L-methionine is bound by residues 32-34 (GGH), aspartate 52, phenylalanine 78, aspartate 99, and glutamine 106.

It belongs to the methyltransferase superfamily. RsmH family.

The protein localises to the cytoplasm. It carries out the reaction cytidine(1402) in 16S rRNA + S-adenosyl-L-methionine = N(4)-methylcytidine(1402) in 16S rRNA + S-adenosyl-L-homocysteine + H(+). Functionally, specifically methylates the N4 position of cytidine in position 1402 (C1402) of 16S rRNA. In Acinetobacter baylyi (strain ATCC 33305 / BD413 / ADP1), this protein is Ribosomal RNA small subunit methyltransferase H.